A 213-amino-acid chain; its full sequence is Ras-related protein Rab-25 (213 aa).

Residues S21, G24, K25, T26, N27, S38, H39, T43, and T44 each coordinate GTP. Position 26 (T26) interacts with Mg(2+). 2 short sequence motifs (switch) span residues 35–49 (NEFS…GVEF) and 67–84 (DTAG…YYRG). T44 and D67 together coordinate Mg(2+). GTP is bound by residues G70, N125, K126, D128, A156, and L157. S-geranylgeranyl cysteine attachment occurs at residues C209 and C210. A Cysteine methyl ester modification is found at C210. Positions 211 to 213 (ISL) are cleaved as a propeptide — removed in mature form.

Belongs to the small GTPase superfamily. Rab family. In terms of assembly, interacts (GTP-bound form) with RAB11FIP1, RAB11FIP2, RAB11FIP3 and RAB11FIP4. Interacts (via the hypervariable C-terminal region) with ITGB1 (via the cytoplasmic region); the interaction is GTP-dependent. Interacts with ITGAV. Associates with the integrin alpha-V/beta-1 heterodimer. Interacts with VPS33B. It depends on Mg(2+) as a cofactor.

Its subcellular location is the cell membrane. The protein localises to the cell projection. The protein resides in the pseudopodium membrane. It is found in the cytoplasmic vesicle. It carries out the reaction GTP + H2O = GDP + phosphate + H(+). Regulated by guanine nucleotide exchange factors (GEFs) which promote the exchange of bound GDP for free GTP. Regulated by GTPase activating proteins (GAPs) which increase the GTP hydrolysis activity. Inhibited by GDP dissociation inhibitors (GDIs) which prevent Rab-GDP dissociation. The small GTPases Rab are key regulators of intracellular membrane trafficking, from the formation of transport vesicles to their fusion with membranes. Rabs cycle between an inactive GDP-bound form and an active GTP-bound form that is able to recruit to membranes different set of downstream effectors directly responsible for vesicle formation, movement, tethering and fusion. RAB25 regulates epithelial cell differentiation, proliferation and survival, thereby playing key roles in tumorigenesis. Promotes invasive migration of cells in which it functions to localize and maintain integrin alpha-V/beta-1 at the tips of extending pseudopodia. Involved in the regulation of epithelial morphogenesis through the control of CLDN4 expression and localization at tight junctions. May selectively regulate the apical recycling pathway. Together with MYO5B regulates transcytosis. This chain is Ras-related protein Rab-25, found in Mus musculus (Mouse).